The primary structure comprises 671 residues: DNA ligase (671 aa).

Residues 32-36 (DAEYD), 81-82 (SL), and glutamate 113 each bind NAD(+). The active-site N6-AMP-lysine intermediate is lysine 115. The NAD(+) site is built by arginine 136, glutamate 173, lysine 290, and lysine 314. Positions 408, 411, 426, and 432 each coordinate Zn(2+). The region spanning 593–671 (EIDSPFAGKT…EAEMLRLLGS (79 aa)) is the BRCT domain.

This sequence belongs to the NAD-dependent DNA ligase family. LigA subfamily. It depends on Mg(2+) as a cofactor. The cofactor is Mn(2+).

It carries out the reaction NAD(+) + (deoxyribonucleotide)n-3'-hydroxyl + 5'-phospho-(deoxyribonucleotide)m = (deoxyribonucleotide)n+m + AMP + beta-nicotinamide D-nucleotide.. Its function is as follows. DNA ligase that catalyzes the formation of phosphodiester linkages between 5'-phosphoryl and 3'-hydroxyl groups in double-stranded DNA using NAD as a coenzyme and as the energy source for the reaction. It is essential for DNA replication and repair of damaged DNA. In Shigella flexneri serotype 5b (strain 8401), this protein is DNA ligase.